Here is a 264-residue protein sequence, read N- to C-terminus: Apolipoprotein A-I (264 aa).

The signal sequence occupies residues 1–18 (MRGVLVTLAVLFLTGTQA). A run of 2 repeats spans residues 67-88 (LKLA…EDMT) and 89-110 (PYYR…AELT). Residues 67 to 264 (LKLADNLDTL…LLDEVQKTMA (198 aa)) are 10 X approximate tandem repeats. The 3; half-length repeat unit spans residues 111–121 (KDLEEVKEKIR). Repeat copies occupy residues 122-143 (PFLD…QRLA), 144-165 (PVAQ…AKLT), 166-187 (PVAE…KNLA), 188-209 (PYSS…ERGI), and 210-231 (PQAS…EKMT). Residues 232-242 (PLVQEFKERLT) form a 9; half-length repeat. The stretch at 243 to 264 (PYAENLKNRLIDLLDEVQKTMA) is repeat 10.

It belongs to the apolipoprotein A1/A4/E family. In terms of tissue distribution, major protein of VLDL, HDL, LDL and in chylomicrons. Expressed in a number of tissues including liver, small intestine, lung, kidney, heart and muscle with highest expression in liver and small intestine.

The protein localises to the secreted. In terms of biological role, participates in the reverse transport of cholesterol from tissues to the liver for excretion by promoting cholesterol efflux from tissues and by acting as a cofactor for the lecithin cholesterol acyltransferase (LCAT). In Coturnix japonica (Japanese quail), this protein is Apolipoprotein A-I (APOA1).